Reading from the N-terminus, the 307-residue chain is 3-methyl-2-oxobutanoate hydroxymethyltransferase (307 aa).

The Mg(2+) site is built by Asp-61 and Asp-100. 3-methyl-2-oxobutanoate contacts are provided by residues 61–62, Asp-100, and Lys-130; that span reads DS. Mg(2+) is bound at residue Glu-132. Glu-199 (proton acceptor) is an active-site residue.

This sequence belongs to the PanB family. Homodecamer; pentamer of dimers. The cofactor is Mg(2+).

Its subcellular location is the cytoplasm. The enzyme catalyses 3-methyl-2-oxobutanoate + (6R)-5,10-methylene-5,6,7,8-tetrahydrofolate + H2O = 2-dehydropantoate + (6S)-5,6,7,8-tetrahydrofolate. It participates in cofactor biosynthesis; (R)-pantothenate biosynthesis; (R)-pantoate from 3-methyl-2-oxobutanoate: step 1/2. Functionally, catalyzes the reversible reaction in which hydroxymethyl group from 5,10-methylenetetrahydrofolate is transferred onto alpha-ketoisovalerate to form ketopantoate. In Nitratidesulfovibrio vulgaris (strain ATCC 29579 / DSM 644 / CCUG 34227 / NCIMB 8303 / VKM B-1760 / Hildenborough) (Desulfovibrio vulgaris), this protein is 3-methyl-2-oxobutanoate hydroxymethyltransferase.